The chain runs to 141 residues: Large ribosomal subunit protein uL11 (141 aa).

This sequence belongs to the universal ribosomal protein uL11 family. As to quaternary structure, part of the ribosomal stalk of the 50S ribosomal subunit. Interacts with L10 and the large rRNA to form the base of the stalk. L10 forms an elongated spine to which L12 dimers bind in a sequential fashion forming a multimeric L10(L12)X complex. In terms of processing, one or more lysine residues are methylated.

Functionally, forms part of the ribosomal stalk which helps the ribosome interact with GTP-bound translation factors. The polypeptide is Large ribosomal subunit protein uL11 (Chlorobium phaeobacteroides (strain BS1)).